A 433-amino-acid polypeptide reads, in one-letter code: Pyrimidine-nucleoside phosphorylase (433 aa).

Phosphate is bound at residue lysine 81–serine 83. Residues glycine 88 and threonine 90 each contribute to the K(+) site. Phosphate is bound by residues threonine 92, lysine 108–serine 110, and threonine 120. Arginine 168 and lysine 187 together coordinate substrate. The K(+) site is built by leucine 243, alanine 246, and glutamate 255.

The protein belongs to the thymidine/pyrimidine-nucleoside phosphorylase family. Homodimer. K(+) serves as cofactor.

The enzyme catalyses uridine + phosphate = alpha-D-ribose 1-phosphate + uracil. It catalyses the reaction thymidine + phosphate = 2-deoxy-alpha-D-ribose 1-phosphate + thymine. It carries out the reaction 2'-deoxyuridine + phosphate = 2-deoxy-alpha-D-ribose 1-phosphate + uracil. In terms of biological role, catalyzes phosphorolysis of the pyrimidine nucleosides uridine, thymidine and 2'-deoxyuridine with the formation of the corresponding pyrimidine base and ribose-1-phosphate. This chain is Pyrimidine-nucleoside phosphorylase (pdp), found in Geobacillus stearothermophilus (Bacillus stearothermophilus).